The primary structure comprises 138 residues: Transcription antitermination protein NusB (138 aa).

Belongs to the NusB family.

Functionally, involved in transcription antitermination. Required for transcription of ribosomal RNA (rRNA) genes. Binds specifically to the boxA antiterminator sequence of the ribosomal RNA (rrn) operons. This is Transcription antitermination protein NusB from Coxiella burnetii (strain CbuK_Q154) (Coxiella burnetii (strain Q154)).